A 286-amino-acid chain; its full sequence is Ribosomal RNA small subunit methyltransferase A (286 aa).

S-adenosyl-L-methionine-binding residues include H11, L13, G44, E65, D90, and N115.

This sequence belongs to the class I-like SAM-binding methyltransferase superfamily. rRNA adenine N(6)-methyltransferase family. RsmA subfamily.

Its subcellular location is the cytoplasm. The catalysed reaction is adenosine(1518)/adenosine(1519) in 16S rRNA + 4 S-adenosyl-L-methionine = N(6)-dimethyladenosine(1518)/N(6)-dimethyladenosine(1519) in 16S rRNA + 4 S-adenosyl-L-homocysteine + 4 H(+). Functionally, specifically dimethylates two adjacent adenosines (A1518 and A1519) in the loop of a conserved hairpin near the 3'-end of 16S rRNA in the 30S particle. May play a critical role in biogenesis of 30S subunits. The protein is Ribosomal RNA small subunit methyltransferase A of Nostoc punctiforme (strain ATCC 29133 / PCC 73102).